The following is a 399-amino-acid chain: Formate-dependent phosphoribosylglycinamide formyltransferase (399 aa).

N(1)-(5-phospho-beta-D-ribosyl)glycinamide is bound by residues 8 to 9 and Glu-68; that span reads EL. ATP-binding positions include Arg-100, Lys-141, 146–151, 185–188, and Glu-193; these read SSGHGQ and EALA. The region spanning 105 to 308 is the ATP-grasp domain; the sequence is VLAHEELGLP…EFALHARAIL (204 aa). Residues Glu-266 and Glu-279 each coordinate Mg(2+). N(1)-(5-phospho-beta-D-ribosyl)glycinamide contacts are provided by residues Asp-286, Lys-361, and 368-369; that span reads RR.

This sequence belongs to the PurK/PurT family. As to quaternary structure, homodimer.

It catalyses the reaction N(1)-(5-phospho-beta-D-ribosyl)glycinamide + formate + ATP = N(2)-formyl-N(1)-(5-phospho-beta-D-ribosyl)glycinamide + ADP + phosphate + H(+). The protein operates within purine metabolism; IMP biosynthesis via de novo pathway; N(2)-formyl-N(1)-(5-phospho-D-ribosyl)glycinamide from N(1)-(5-phospho-D-ribosyl)glycinamide (formate route): step 1/1. Involved in the de novo purine biosynthesis. Catalyzes the transfer of formate to 5-phospho-ribosyl-glycinamide (GAR), producing 5-phospho-ribosyl-N-formylglycinamide (FGAR). Formate is provided by PurU via hydrolysis of 10-formyl-tetrahydrofolate. This Bifidobacterium longum (strain NCC 2705) protein is Formate-dependent phosphoribosylglycinamide formyltransferase.